Reading from the N-terminus, the 377-residue chain is Nitric oxide reductase FlRd-NAD(+) reductase (377 aa).

The protein belongs to the FAD-dependent oxidoreductase family. Requires FAD as cofactor.

The protein localises to the cytoplasm. The enzyme catalyses 2 reduced [nitric oxide reductase rubredoxin domain] + NAD(+) + H(+) = 2 oxidized [nitric oxide reductase rubredoxin domain] + NADH. The protein operates within nitrogen metabolism; nitric oxide reduction. Its function is as follows. One of at least two accessory proteins for anaerobic nitric oxide (NO) reductase. Reduces the rubredoxin moiety of NO reductase. This is Nitric oxide reductase FlRd-NAD(+) reductase from Escherichia coli (strain K12 / MC4100 / BW2952).